A 661-amino-acid polypeptide reads, in one-letter code: DNA cross-link repair protein PSO2/SNM1 (661 aa).

The segment at 1–44 (MSRKSIVQIRRSEVKRKRSSTASSTSEGKTLHKNTHTSSKRQRT) is disordered. Over residues 31 to 43 (LHKNTHTSSKRQR) the composition is skewed to basic residues. The UBZ4-type zinc-finger motif lies at 144 to 174 (VIQCPICLENLSHLELYERETHCDTCIGSDP). Zn(2+) contacts are provided by C147, C150, H165, and C169.

This sequence belongs to the DNA repair metallo-beta-lactamase (DRMBL) family.

The protein localises to the nucleus. Functionally, required for DNA interstrand cross-link repair. This requires cleavage of cross-linked DNA to generate DNA double strand breaks (DSBs). This protein has 5' exonuclease activity on single-stranded and double-stranded DNA, which appears to be necessary for the processing of DNA double strand breaks prior to ligation. This is DNA cross-link repair protein PSO2/SNM1 (PSO2) from Saccharomyces cerevisiae (strain ATCC 204508 / S288c) (Baker's yeast).